A 70-amino-acid chain; its full sequence is Protease inhibitor HPI (70 aa).

Alanine 2 carries the N-acetylalanine modification. Cysteine 5 is subject to S-glutathionyl cysteine; alternate.

Belongs to the protease inhibitor I13 (potato type I serine protease inhibitor) family. Monomer and homodimer; disulfide-linked. Post-translationally, occurs in 3 forms that differ in the modification of Cys-5, HPI-1 forms a homodimer through a disulfide bond, HPI-2a is modified by glutathionylation, and HPI-2b is covalently modified by addition of an unidentified adduct but not by a disulfide linkage.

Functionally, inhibitor of serine proteases, strongly inhibits subtilisin A and weakly inhibits trypsin. Does not inhibit chymotrypsin, papain, pepsin, pronase E, protease type XIII and thermolysin. HPI-1 inhibits subtilisin A with an Ki of 0.21 nM. HPI-2a inhibits subtilisin A with an Ki of 0.08 nM. HPI-2b inhibits subtilisin A with an Ki of 0.1 nM. The sequence is that of Protease inhibitor HPI from Hevea brasiliensis (Para rubber tree).